The chain runs to 309 residues: Foldase protein PrsA (309 aa).

The N-terminal stretch at 1-22 (MKTRSKLAAGFLTLMSVATLAA) is a signal peptide. The N-palmitoyl cysteine moiety is linked to residue Cys-23. Cys-23 carries the S-diacylglycerol cysteine lipid modification. The PpiC domain occupies 146–241 (TPETSVQVIK…TSYYIIKVTD (96 aa)).

The protein belongs to the PrsA family.

Its subcellular location is the cell membrane. It carries out the reaction [protein]-peptidylproline (omega=180) = [protein]-peptidylproline (omega=0). Plays a major role in protein secretion by helping the post-translocational extracellular folding of several secreted proteins. In Streptococcus agalactiae serotype Ia (strain ATCC 27591 / A909 / CDC SS700), this protein is Foldase protein PrsA.